The primary structure comprises 155 residues: 2-C-methyl-D-erythritol 2,4-cyclodiphosphate synthase (155 aa).

Positions 8 and 10 each coordinate a divalent metal cation. Residues 8–10 and 34–35 contribute to the 4-CDP-2-C-methyl-D-erythritol 2-phosphate site; these read DVH and HS. His42 serves as a coordination point for a divalent metal cation. 4-CDP-2-C-methyl-D-erythritol 2-phosphate-binding positions include 56–58, 61–65, 100–106, 132–135, Phe139, and Arg142; these read DIG, FPDTD, AQAPKMA, and TTTE.

Belongs to the IspF family. Homotrimer. The cofactor is a divalent metal cation.

It catalyses the reaction 4-CDP-2-C-methyl-D-erythritol 2-phosphate = 2-C-methyl-D-erythritol 2,4-cyclic diphosphate + CMP. Its pathway is isoprenoid biosynthesis; isopentenyl diphosphate biosynthesis via DXP pathway; isopentenyl diphosphate from 1-deoxy-D-xylulose 5-phosphate: step 4/6. Functionally, involved in the biosynthesis of isopentenyl diphosphate (IPP) and dimethylallyl diphosphate (DMAPP), two major building blocks of isoprenoid compounds. Catalyzes the conversion of 4-diphosphocytidyl-2-C-methyl-D-erythritol 2-phosphate (CDP-ME2P) to 2-C-methyl-D-erythritol 2,4-cyclodiphosphate (ME-CPP) with a corresponding release of cytidine 5-monophosphate (CMP). The chain is 2-C-methyl-D-erythritol 2,4-cyclodiphosphate synthase from Saccharophagus degradans (strain 2-40 / ATCC 43961 / DSM 17024).